A 409-amino-acid chain; its full sequence is Probable sodium/metabolite cotransporter BASS6, chloroplastic (409 aa).

A chloroplast-targeting transit peptide spans 1-49; sequence MSVITTPIETLHLKSTLRLLPRAVYRSQRIQVFPPNIFSNTSLSSPLRI. A run of 9 helical transmembrane segments spans residues 100 to 120, 121 to 141, 170 to 190, 191 to 211, 221 to 241, 253 to 273, 285 to 305, 316 to 336, and 381 to 401; these read ILPHVVLASTILALIYPPSFT, WFTSRYFVPALGFLMFAVGIN, VLGFIFGLAAVSLFQLPTPIG, AGIMLVSCVSGAQLSNYATFL, IVMTSLSTATAVLVTPMLSLL, GMISSILQVVIAPIAAGLLLN, PFLPILSVLDTACCVGAPLAL, ATILLLVTMFHLSAFLAGYFL, and IPPAISTVVMSLMGFTLVLIW.

The protein belongs to the bile acid:sodium symporter (BASS) (TC 2.A.28) family.

The protein localises to the membrane. The protein resides in the plastid. It localises to the chloroplast envelope. Its function is as follows. May function as sodium-coupled metabolite transporter across the chloroplast envelope. In Arabidopsis thaliana (Mouse-ear cress), this protein is Probable sodium/metabolite cotransporter BASS6, chloroplastic (BASS6).